A 151-amino-acid chain; its full sequence is Transcriptional regulator MraZ (151 aa).

SpoVT-AbrB domains lie at 5 to 52 (ANAI…PLSE) and 81 to 124 (AVDL…DEDA).

Belongs to the MraZ family. Forms oligomers.

The protein resides in the cytoplasm. Its subcellular location is the nucleoid. This Pseudomonas syringae pv. tomato (strain ATCC BAA-871 / DC3000) protein is Transcriptional regulator MraZ.